A 110-amino-acid polypeptide reads, in one-letter code: PHD finger-like domain-containing protein 5A (110 aa).

Residue A2 is modified to N-acetylalanine. K3 is modified (N6-acetyllysine). The Zn(2+) site is built by C11, C23, C26, C30, C33, C46, C49, C58, C61, C72, and C75. An interaction with SF3B1 and SF3B3 region spans residues S35 to Y51. The interval E79 to R82 is interaction with SF3B3. C85 contacts Zn(2+). At S94 the chain carries Phosphoserine.

It belongs to the PHF5 family. Component of the 17S U2 SnRNP complex, a ribonucleoprotein complex that contains small nuclear RNA (snRNA) U2 and a number of specific proteins. Part of the SF3B subcomplex of the 17S U2 SnRNP complex. SF3B associates with the splicing subcomplex SF3A and a 12S RNA unit to form the U2 small nuclear ribonucleoproteins complex (U2 snRNP). Within the SF3B complex interacts directly with SF3B1 and SF3B3. Component of the minor spliceosome, which splices U12-type introns. Within this complex, interacts with CRIPT. Interacts (via N-terminus) with U2AF1 and SRSF5; acts to bridge the two. Interacts (via C-terminus) with EP400 and DDX1; acts to bridge the two. Interacts with the PAF1 complex (PAF1C) composed of CDC73, PAF1, LEO1, CTR9, RTF1 and SKIC8. Within the PAF1C interacts directly with CDC73 and SKIC8. Interacts with RNA polymerase II. As to expression, expressed in primary spermatocytes (at protein level). Ubiquitously expressed in pre- and postnatal tissues. Highly expressed in pluripotent embryonic stem cells (ESCs) (at protein level) and induced pluripotent stem cells (iPSCs).

The protein resides in the nucleus. It is found in the nucleus speckle. In terms of biological role, component of the 17S U2 SnRNP complex of the spliceosome, a large ribonucleoprotein complex that removes introns from transcribed pre-mRNAs. The 17S U2 SnRNP complex (1) directly participates in early spliceosome assembly and (2) mediates recognition of the intron branch site during pre-mRNA splicing by promoting the selection of the pre-mRNA branch-site adenosine, the nucleophile for the first step of splicing. Within the 17S U2 SnRNP complex, PHF5A is part of the SF3B subcomplex, which is required for 'A' complex assembly formed by the stable binding of U2 snRNP to the branchpoint sequence in pre-mRNA. Sequence independent binding of SF3A and SF3B subcomplexes upstream of the branch site is essential, it may anchor U2 snRNP to the pre-mRNA. Also acts as a component of the minor spliceosome, which is involved in the splicing of U12-type introns in pre-mRNAs. Also involved in elongation by RNA polymerase II as part of the PAF1 complex (PAF1C). PAF1C is required for maintenance of embryonic stem cell (ESC) self-renewal and cellular reprogramming of stem cells. Maintains pluripotency by recruiting and stabilizing PAF1C on pluripotency genes loci, and by regulating the expression of the pluripotency genes. Regulates the deposition of elongation-associated histone modifications, including dimethylated histone H3 'Lys-79' (H3K79me2) and trimethylated histone H3 'Lys-36' (H3K36me3), on PAF1C targets, self-renewal and pluripotency genes. Regulates RNA polymerase II promoter-proximal pause release of the PAF1C targets and self-renewal genes, and the levels of elongating ('Ser-2' phosphorylated) RNA polymerase II in their gene bodies. Regulates muscle specification in adult stem cells by stabilizing PAF1C in chromatin to promote myogenic differentiation. Acts as a transcriptional regulator by binding to the GJA1/Cx43 promoter and enhancing its up-regulation by ESR1/ER-alpha. The protein is PHD finger-like domain-containing protein 5A (Phf5a) of Mus musculus (Mouse).